The sequence spans 62 residues: MKTLVLFIIFGLAALFLLSSANELEETERGCQKFFWTCHPGQPPCCSGLACTWPTEICILGR.

The signal sequence occupies residues 1 to 21; it reads MKTLVLFIIFGLAALFLLSSA. The propeptide occupies 22-29; the sequence is NELEETER. 3 disulfides stabilise this stretch: Cys31/Cys46, Cys38/Cys51, and Cys45/Cys58.

The protein belongs to the neurotoxin 10 (Hwtx-1) family. 30 (Jztx-14) subfamily. Expressed by the venom gland.

The protein resides in the secreted. Its function is as follows. Probable ion channel inhibitor. The polypeptide is U8-theraphotoxin-Cg1a 1 (Chilobrachys guangxiensis (Chinese earth tiger tarantula)).